A 305-amino-acid chain; its full sequence is Homeobox protein ceh-23 (305 aa).

Disordered stretches follow at residues A113 to R140 and R262 to N305. Residues A120–S135 show a composition bias toward polar residues. The segment at residues H211 to Q270 is a DNA-binding region (homeobox). Residues G287 to N305 show a composition bias toward acidic residues.

This sequence belongs to the distal-less homeobox family.

Its subcellular location is the nucleus. Probable transcription factor. Required for differentiation of AIY interneurons, acting downstream of LIM/homeobox protein ttx-3. Modulates gene expression, acting downstream of AMP kinase aak-2/AMPK signaling. Modulates lifespan. The polypeptide is Homeobox protein ceh-23 (ceh-23) (Caenorhabditis elegans).